Here is a 455-residue protein sequence, read N- to C-terminus: MNKFFLIGIGGISMSAIALILKNHGHIVEGSDMQESITTRMLREKGINVYIGHDENHIKGDEIVIFTAAIPKDNPELVKAKRLGLKVYERAEFLGMLMKDYKNVIAVSGTHGKTTTTSMIGYILKKALLNPTVLVGAFVKQLGGNFCIGSSEYLVVEACEYVDSFLNFNPSIGVILNIDNDHLDYFKDIESIKDSFRKFALKIPQNGFIVANLDDENVYSVASYLKQNVIYFSTKTKADFWADNITSCNGYYEFDVVNKDFKHLCHIKLNIPGFHNVYNSLAAFSVAYTLGIDKNTIKEAIFEFCGASRRLEKLGKIDGIVLYDDYAHHPTEIEATLRTLKKLAKEKVIVIFQPHTFSRLKSLMEGFVKSLSLADKVIVTDVYAAREKNVYGVSSKDLYEKLKKAGVDCEYIDQFEKIAEYVLNTAQKGDIVATIGAGDVNKCIELILDKSPVKS.

Gly-109–Thr-115 is an ATP binding site.

It belongs to the MurCDEF family.

It is found in the cytoplasm. The catalysed reaction is UDP-N-acetyl-alpha-D-muramate + L-alanine + ATP = UDP-N-acetyl-alpha-D-muramoyl-L-alanine + ADP + phosphate + H(+). It participates in cell wall biogenesis; peptidoglycan biosynthesis. Functionally, cell wall formation. This Caldicellulosiruptor saccharolyticus (strain ATCC 43494 / DSM 8903 / Tp8T 6331) protein is UDP-N-acetylmuramate--L-alanine ligase.